The chain runs to 195 residues: AP-4-A phosphorylase (195 aa).

A compositionally biased stretch (basic and acidic residues) spans 1–17; it reads MSDEDRTDRATEDHTIF. The disordered stretch occupies residues 1–20; that stretch reads MSDEDRTDRATEDHTIFDRG. Positions 57–166 constitute an HIT domain; that stretch reads PFTEIPQLSD…VPRWGGDANF (110 aa). The Histidine triad motif signature appears at 151–155; that stretch reads HLHVH. The active-site Tele-AMP-histidine intermediate is histidine 153.

In terms of assembly, homotetramer. It depends on a divalent metal cation as a cofactor.

It carries out the reaction ADP + ATP + H(+) = P(1),P(4)-bis(5'-adenosyl) tetraphosphate + phosphate. Functionally, catabolizes diadenosine 5',5'''-P1,P4-tetraphosphate (Ap4A) into ADP and ATP. The protein is AP-4-A phosphorylase of Mycobacterium tuberculosis (strain CDC 1551 / Oshkosh).